A 526-amino-acid polypeptide reads, in one-letter code: Probable fucosyltransferase 7 (526 aa).

Residues 1 to 4 are Cytoplasmic-facing; sequence MKTK. A helical; Signal-anchor for type II membrane protein transmembrane segment spans residues 5–25; it reads LMITIFSCLLLWSMLLLLSFS. The Lumenal portion of the chain corresponds to 26–526; sequence NIFKHQLLGA…KLVDDTKNEL (501 aa). Asparagine 211, asparagine 215, and asparagine 363 each carry an N-linked (GlcNAc...) asparagine glycan.

The protein belongs to the glycosyltransferase 37 family. Expressed in roots, leaves, stems and seedlings.

The protein localises to the golgi apparatus. Its subcellular location is the golgi stack membrane. The protein operates within protein modification; protein glycosylation. Its function is as follows. May be involved in cell wall biosynthesis. May act as a fucosyltransferase. The polypeptide is Probable fucosyltransferase 7 (FUT7) (Arabidopsis thaliana (Mouse-ear cress)).